Reading from the N-terminus, the 337-residue chain is Ketol-acid reductoisomerase (NADP(+)) (337 aa).

In terms of domain architecture, KARI N-terminal Rossmann spans 1–183 (MAIETLYDSD…GGARAGVIPT (183 aa)). NADP(+)-binding positions include 26-29 (YGSQ), arginine 49, serine 52, serine 54, and 84-87 (DTSQ). Histidine 109 is an active-site residue. Glycine 135 is a binding site for NADP(+). The region spanning 184 to 329 (TFKDETETDL…SQLRDLMSWV (146 aa)) is the KARI C-terminal knotted domain. The Mg(2+) site is built by aspartate 192, glutamate 196, glutamate 228, and glutamate 232. Residue serine 253 coordinates substrate.

It belongs to the ketol-acid reductoisomerase family. Mg(2+) serves as cofactor.

It catalyses the reaction (2R)-2,3-dihydroxy-3-methylbutanoate + NADP(+) = (2S)-2-acetolactate + NADPH + H(+). The enzyme catalyses (2R,3R)-2,3-dihydroxy-3-methylpentanoate + NADP(+) = (S)-2-ethyl-2-hydroxy-3-oxobutanoate + NADPH + H(+). It participates in amino-acid biosynthesis; L-isoleucine biosynthesis; L-isoleucine from 2-oxobutanoate: step 2/4. It functions in the pathway amino-acid biosynthesis; L-valine biosynthesis; L-valine from pyruvate: step 2/4. Functionally, involved in the biosynthesis of branched-chain amino acids (BCAA). Catalyzes an alkyl-migration followed by a ketol-acid reduction of (S)-2-acetolactate (S2AL) to yield (R)-2,3-dihydroxy-isovalerate. In the isomerase reaction, S2AL is rearranged via a Mg-dependent methyl migration to produce 3-hydroxy-3-methyl-2-ketobutyrate (HMKB). In the reductase reaction, this 2-ketoacid undergoes a metal-dependent reduction by NADPH to yield (R)-2,3-dihydroxy-isovalerate. The chain is Ketol-acid reductoisomerase (NADP(+)) from Corynebacterium aurimucosum (strain ATCC 700975 / DSM 44827 / CIP 107346 / CN-1) (Corynebacterium nigricans).